The following is a 275-amino-acid chain: 5'-nucleotidase SurE (275 aa).

Residues Asp-14, Asp-15, Ser-46, and Asn-104 each contribute to the a divalent metal cation site.

Belongs to the SurE nucleotidase family. A divalent metal cation is required as a cofactor.

It localises to the cytoplasm. The enzyme catalyses a ribonucleoside 5'-phosphate + H2O = a ribonucleoside + phosphate. Nucleotidase that shows phosphatase activity on nucleoside 5'-monophosphates. This chain is 5'-nucleotidase SurE, found in Synechocystis sp. (strain ATCC 27184 / PCC 6803 / Kazusa).